The chain runs to 374 residues: Chaperone protein DnaJ (374 aa).

The J domain occupies 4–69 (SYYEILEITQ…EKRAIYDRYG (66 aa)). A CR-type zinc finger spans residues 136 to 213 (GCKKNIDFTY…CKGLGYNESK (78 aa)). Positions 149, 152, 165, 168, 187, 190, 201, and 204 each coordinate Zn(2+). CXXCXGXG motif repeat units follow at residues 149 to 156 (CKTCNGTG), 165 to 172 (CPKCQGRG), 187 to 194 (CPDCQGSG), and 201 to 208 (CSDCKGLG).

The protein belongs to the DnaJ family. In terms of assembly, homodimer. Requires Zn(2+) as cofactor.

Its subcellular location is the cytoplasm. Its function is as follows. Participates actively in the response to hyperosmotic and heat shock by preventing the aggregation of stress-denatured proteins and by disaggregating proteins, also in an autonomous, DnaK-independent fashion. Unfolded proteins bind initially to DnaJ; upon interaction with the DnaJ-bound protein, DnaK hydrolyzes its bound ATP, resulting in the formation of a stable complex. GrpE releases ADP from DnaK; ATP binding to DnaK triggers the release of the substrate protein, thus completing the reaction cycle. Several rounds of ATP-dependent interactions between DnaJ, DnaK and GrpE are required for fully efficient folding. Also involved, together with DnaK and GrpE, in the DNA replication of plasmids through activation of initiation proteins. This is Chaperone protein DnaJ from Campylobacter jejuni subsp. jejuni serotype O:6 (strain 81116 / NCTC 11828).